We begin with the raw amino-acid sequence, 257 residues long: 5'-nucleotidase SurE (257 aa).

A divalent metal cation-binding residues include D8, D9, S39, and N87. The segment at 234-257 (VSPLTAPHPTTGHEGLAGLAEKYQ) is disordered.

Belongs to the SurE nucleotidase family. It depends on a divalent metal cation as a cofactor.

It is found in the cytoplasm. The catalysed reaction is a ribonucleoside 5'-phosphate + H2O = a ribonucleoside + phosphate. In terms of biological role, nucleotidase that shows phosphatase activity on nucleoside 5'-monophosphates. This chain is 5'-nucleotidase SurE, found in Natronomonas pharaonis (strain ATCC 35678 / DSM 2160 / CIP 103997 / JCM 8858 / NBRC 14720 / NCIMB 2260 / Gabara) (Halobacterium pharaonis).